The primary structure comprises 508 residues: Matrix metalloproteinase-19 (508 aa).

An N-terminal signal peptide occupies residues 1 to 18 (MNCQQLWLGFLLPMTVSG). Positions 19-97 (RVLGLAEVAP…EDPFNQKTLK (79 aa)) are excised as a propeptide. The Cysteine switch signature appears at 83-90 (PRCGLEDP). Zn(2+) is bound by residues cysteine 85 and histidine 212. Glutamate 213 is a catalytic residue. Zn(2+)-binding residues include histidine 216 and histidine 222. Positions 262-288 (IRDEEEEETELPTVPPVPTEPSPMPDP) are disordered. Positions 274 to 287 (TVPPVPTEPSPMPD) are enriched in pro residues. Hemopexin repeat units follow at residues 286-333 (PDPC…WEGL), 334-380 (PGNL…EPNL), 381-425 (DAAL…FTGV), and 426-472 (PNQP…WMHC). The cysteines at positions 289 and 472 are disulfide-linked. Asparagine 464 is a glycosylation site (N-linked (GlcNAc...) asparagine).

It belongs to the peptidase M10A family. Requires Zn(2+) as cofactor. Ca(2+) serves as cofactor. In terms of processing, activated by autolytic cleavage after Lys-97. Post-translationally, tyrosine phosphorylated by PKDCC/VLK. Expressed in mammary gland, placenta, lung, pancreas, ovary, small intestine, spleen, thymus, prostate, testis colon, heart and blood vessel walls. Not detected in brain and peripheral blood leukocytes. Also expressed in the synovial fluid of normal and rheumatoid patients.

It localises to the secreted. It is found in the extracellular space. Its subcellular location is the extracellular matrix. With respect to regulation, strongly inhibited by TIMP-2, TIMP-3 and TIMP-4, while TIMP-1 is less efficient. Functionally, endopeptidase that degrades various components of the extracellular matrix, such as aggrecan and cartilage oligomeric matrix protein (comp), during development, haemostasis and pathological conditions (arthritic disease). May also play a role in neovascularization or angiogenesis. Hydrolyzes collagen type IV, laminin, nidogen, nascin-C isoform, fibronectin, and type I gelatin. The polypeptide is Matrix metalloproteinase-19 (MMP19) (Homo sapiens (Human)).